The primary structure comprises 355 residues: tRNA pseudouridine synthase D (355 aa).

The Nucleophile role is filled by Asp84. The TRUD domain maps to 160–306 (GVPNYFGLQR…MAHERRILRL (147 aa)).

The protein belongs to the pseudouridine synthase TruD family.

The enzyme catalyses uridine(13) in tRNA = pseudouridine(13) in tRNA. Responsible for synthesis of pseudouridine from uracil-13 in transfer RNAs. The protein is tRNA pseudouridine synthase D of Pseudomonas aeruginosa (strain UCBPP-PA14).